A 297-amino-acid chain; its full sequence is Nucleotide-binding protein BURPS668_0577 (297 aa).

Residue 8-15 (GISGSGKS) participates in ATP binding. 57-60 (DARS) lines the GTP pocket.

Belongs to the RapZ-like family.

Its function is as follows. Displays ATPase and GTPase activities. The chain is Nucleotide-binding protein BURPS668_0577 from Burkholderia pseudomallei (strain 668).